The chain runs to 1224 residues: MAYPEKVGARVRYNFGRLREVLDLPNLIEVQRNSYKWFLEEGLREVFQDISPIQDFTGNLVLEFLDYTLGEPKYTVEECKERDVTYAAPLRVKVRLINKETGEVKEQDVFMGDFPLMTEKGTFIINGAERVIVSQLVRSPGVYFDETIDPSGKKLYTATIIPNRGAWLEFETDVNDHIFVRIDRTRKIPATVLVRALGYGTKAQVAELFNEDKNILETLARDNTDSEEEALVEIYKRLRPGEPPTVDSARSLLTSLFFDPKRYDLANVGRYKIQKKLKHGVLYRYGPNPDGKTVFDPYLKKEVPQKREFIRELTKEDIIETIRYLLKLMNGEGQVDDIDHLGNRRLRSVGELLQNQFRIGLSRMERVVRERMTIQDVDVITPQVLINIRPVVAAIKEFFGSSQLSQFMDQTNPLAELTHKRRLSALGPGGLSRERAGFEVRDVHHSHYGRMCPIETPEGPNIGLIGSLSTYARINEFGFIETPYRKVDKENRRVTDEIVYLTADEEEGYVIAQANAPLDEEGRFIEPRVNARSPEIVVVPADRVDYMDVSPKQVFSIATALIPFLEHDDANRALMGANMQRQAVPLLKAQAPLVGTGIEYKAARDSGVVVIAKESGTVEKVTSTHIEIRNDRGYLDRYKLLKFTRSNQGTCVNQKPIVKKGERVEAGQVIADGPSTDYGELALGRNVLVAFMPWEGYNYEDAILVSEKTVKEDYFTSIHIEEYECDARDTKLGPEEITRDIPNVGEEILKDLDDRGIIRVGAEVRPGDILVGKVTPKGETELTAEERLLRAIFGEKAREVRDTSLRVPHGESGKVVDVKVFSRDNGDELPPGVNQLVRVYIAQKRKISEGDKMAGRHGNKGVIARILPEEDMPFLPDGTPIEIVLNPLGVPSRMNIGQVLEAHLGWAAKVLGYYVSTPVFNGASEESIFEALKEAAFKESGLRSFMEKAGLNEEELIGAVETAEKRAGSREALIKEVEGAESSGETIMAAIERTGLTAGMVNRLEEAGMTKKEILGAMKKLLFARSGKMTLYDGRTGEPFDSPITVGYVYMLKLAHLVDDKIHARSTGPYSLVTQQPLGGKAQFGGQRFGEMEVWALEAYGAAYTLQEILTVKSDDVVGRVKTYEAIVKGENVPEPGVPESFKVLIKELQSLGLDVKVLSEDDQEIEIREVEEDIGETAKELGIDLQEGELPEVEEADYSEDVEDEDMFNEEFFNEDFDLEDDE.

Belongs to the RNA polymerase beta chain family. In terms of assembly, the RNAP catalytic core consists of 2 alpha, 1 beta, 1 beta' and 1 omega subunit. When a sigma factor is associated with the core the holoenzyme is formed, which can initiate transcription.

The catalysed reaction is RNA(n) + a ribonucleoside 5'-triphosphate = RNA(n+1) + diphosphate. Its function is as follows. DNA-dependent RNA polymerase catalyzes the transcription of DNA into RNA using the four ribonucleoside triphosphates as substrates. In Pelotomaculum thermopropionicum (strain DSM 13744 / JCM 10971 / SI), this protein is DNA-directed RNA polymerase subunit beta.